Consider the following 511-residue polypeptide: Bifunctional purine biosynthesis protein PurH (511 aa).

Residues 1–146 (MARLALLSVS…KNFAHTTVLT (146 aa)) enclose the MGS-like domain.

Belongs to the PurH family.

The catalysed reaction is (6R)-10-formyltetrahydrofolate + 5-amino-1-(5-phospho-beta-D-ribosyl)imidazole-4-carboxamide = 5-formamido-1-(5-phospho-D-ribosyl)imidazole-4-carboxamide + (6S)-5,6,7,8-tetrahydrofolate. It carries out the reaction IMP + H2O = 5-formamido-1-(5-phospho-D-ribosyl)imidazole-4-carboxamide. Its pathway is purine metabolism; IMP biosynthesis via de novo pathway; 5-formamido-1-(5-phospho-D-ribosyl)imidazole-4-carboxamide from 5-amino-1-(5-phospho-D-ribosyl)imidazole-4-carboxamide (10-formyl THF route): step 1/1. It participates in purine metabolism; IMP biosynthesis via de novo pathway; IMP from 5-formamido-1-(5-phospho-D-ribosyl)imidazole-4-carboxamide: step 1/1. This Synechocystis sp. (strain ATCC 27184 / PCC 6803 / Kazusa) protein is Bifunctional purine biosynthesis protein PurH.